The following is a 1004-amino-acid chain: MAGKDEAEGLEARLLLLPPEAAAEEPTRCGGGDGGGGGRKRKKTYLDVLGVCCSAEVALVERLLAPLDGVRVVSVVVASRTVVVEHDPAAAPESAIVKALNKAGLEASVRAYGSSGVVSRWPSPYIVASGVLLTASFFEWLFPPLQCLAVAAVVAGAPPMVRRGFAAASRLSLDINVLMLIAVAGALCLGDYTEAGAIVFLFTTAEWLETLACTKASAGMSSLMGMLPVKAVIATTGEVVSVRDVRVGDVVAVRAGEIVPVDGVVVDGQSEVDERSLTGESFPVPKQPHSEVWAGTMNFDGYIAVRTTALAENSTVAKMERLVEAAQNSRSKTQRLIDSCAKYYTPAVVVVAAGVALIPALLGADGLEQWWKLALVMLVSACPCALVLSTPVASFCAMLRAARMGIFIKGGDVLESLGEIRAVAFDKTGTITRGEFSIDSFHLVGDHKVEMDHLLYWIASIESKSSHPMAAALVEYAQSKSIQPNPENVGDFRIYPGEGIYGEIHGKHIYIGNRRTLARASSPQSTQEMGEMIKGVSIGYVICDGELAGVFSLSDDCRTGAAEAIRELGSLGIKSVMLTGDSSAAATHAQGQLGGVMEELHSELLPEDKVRLVSGLKARFGPTMMVGDGMNDAAALAAADVGVSMGISGSAAAMETSHATLMSSDVLRVPEAVRLGRCARRTIAVNVAGSVAVKAAVLALAAAWRPVLWAAVLADVGTCLLVVLNSMTLLREEWKGGAKEDGACRATARSLVMRSQLAADSQAPNAADAGAAGREQTNGCRCCPKPGMSPEHSVVIDIRADGERQEERPAEAAVVAKCCGGGGGEGIRCGASKKPTATVVVAKCCGGGGGGEGTRCGASKNPATAAVVAKCCSGGGGEGIGCGASKKPTATAVVAKCCGGGGEGTRCAASKKPATAAVVAKCCGGDGGEGTGCGASKRSPPAEGSCSGGEGGTNGVGRCCTSVKRPTCCDMGAAEVSDSSPETAKDCRNGRCCAKTMNSGEVKG.

Positions 42–108 (KKTYLDVLGV…ALNKAGLEAS (67 aa)) constitute an HMA domain. A run of 8 helical transmembrane segments spans residues 120 to 140 (RWPSPYIVASGVLLTASFFEW), 144 to 164 (PLQCLAVAAVVAGAPPMVRRG), 171 to 191 (LSLDINVLMLIAVAGALCLGD), 193 to 213 (TEAGAIVFLFTTAEWLETLAC), 340 to 360 (CAKYYTPAVVVVAAGVALIPA), 371 to 391 (WKLALVMLVSACPCALVLSTP), 683 to 703 (IAVNVAGSVAVKAAVLALAAA), and 707 to 727 (VLWAAVLADVGTCLLVVLNSM). The disordered stretch occupies residues 931 to 952 (TGCGASKRSPPAEGSCSGGEGG).

The protein belongs to the cation transport ATPase (P-type) (TC 3.A.3) family. Type IB subfamily. Specifically expressed in roots.

It is found in the vacuole membrane. The enzyme catalyses Zn(2+)(in) + ATP + H2O = Zn(2+)(out) + ADP + phosphate + H(+). It carries out the reaction Cd(2+)(in) + ATP + H2O = Cd(2+)(out) + ADP + phosphate + H(+). Its function is as follows. Root-specific cadmium (Cd) transporter that mediates Cd efflux in root vacuoles. Involved in Cd detoxification by sequestrating Cd into root vacuoles and limiting translocation of Cd from the roots to the shoots, and accumulation in grains. This Oryza sativa subsp. japonica (Rice) protein is Cadmium/zinc-transporting ATPase HMA3.